We begin with the raw amino-acid sequence, 501 residues long: Myrosinase MA1 (501 aa).

Intrachain disulfides connect Cys-6–Cys-438, Cys-14–Cys-434, and Cys-206–Cys-214. An N-linked (GlcNAc...) asparagine glycan is attached at Asn-21. Position 39 (Gln-39) interacts with substrate. His-56 provides a ligand contact to Zn(2+). An N-linked (GlcNAc...) asparagine glycan is attached at Asn-60. Asp-70 is a Zn(2+) binding site. An N-linked (GlcNAc...) asparagine glycan is attached at Asn-90. Substrate is bound by residues His-141 and Asn-186. Gln-187 lines the L-ascorbate pocket. Residues Asn-218 and Asn-244 are each glycosylated (N-linked (GlcNAc...) asparagine). Arg-259 serves as a coordination point for L-ascorbate. Residues Asn-265 and Asn-292 are each glycosylated (N-linked (GlcNAc...) asparagine). Tyr-330 contacts substrate. Asn-343, Asn-346, and Asn-361 each carry an N-linked (GlcNAc...) asparagine glycan. The Nucleophile role is filled by Glu-409. Substrate contacts are provided by residues Trp-457 and 464 to 465 (EF). N-linked (GlcNAc...) asparagine glycosylation occurs at Asn-482.

It belongs to the glycosyl hydrolase 1 family. As to quaternary structure, homodimer. In vacuoles called myrosin grains of a certain class of cells, myrosin cells, distributed in the cotyledons and the axis of the embryo as well as in different organs of the growing plant.

The protein resides in the vacuole. The catalysed reaction is a thioglucoside + H2O = a sugar + a thiol.. Functionally, degradation of glucosinolates (glucose residue linked by a thioglucoside bound to an amino acid derivative) to glucose, sulfate and any of the products: thiocyanates, isothiocyanates, nitriles, epithionitriles or oxazolidine-2-thiones. In Sinapis alba (White mustard), this protein is Myrosinase MA1.